The following is a 173-amino-acid chain: Ribosome maturation factor RimM (173 aa).

Residues 96-169 (PDEYYDHQLE…LVEIDPPEGL (74 aa)) form the PRC barrel domain.

Belongs to the RimM family. As to quaternary structure, binds ribosomal protein uS19.

The protein localises to the cytoplasm. In terms of biological role, an accessory protein needed during the final step in the assembly of 30S ribosomal subunit, possibly for assembly of the head region. Essential for efficient processing of 16S rRNA. May be needed both before and after RbfA during the maturation of 16S rRNA. It has affinity for free ribosomal 30S subunits but not for 70S ribosomes. The sequence is that of Ribosome maturation factor RimM from Mycobacterium sp. (strain JLS).